We begin with the raw amino-acid sequence, 265 residues long: RNA-binding protein 7 (265 aa).

An N-acetylglycine modification is found at Gly-2. The RRM domain maps to 10–87 (RTLFVGNLET…RPIKIQFRSG (78 aa)). ZCCHC8 binding regions lie at residues 25–35 (LLFELFHQAGP) and 59–76 (HEVSVPYAMNLLNGIKLF). The segment at 91-125 (ASQDASVSYPQHHVGNLSPTSTSPNSYERTVGNVS) is disordered. Residues 107 to 125 (LSPTSTSPNSYERTVGNVS) are compositionally biased toward polar residues. Ser-136 is subject to Phosphoserine; by MAPKAPK2. Residue Ser-137 is modified to Phosphoserine. The residue at position 152 (Arg-152) is an Omega-N-methylarginine. Disordered stretches follow at residues 166-224 (DQLG…HGSD) and 237-265 (DDRNHDGWSHDYDNRRDSSRGGKWPSSRH). Polar residues predominate over residues 170 to 196 (FSPSAQPHGHTFNQSSSSQWRQDALSS). Ser-203 carries the phosphoserine modification. Basic and acidic residues-rich tracts occupy residues 207-224 (LADRHYSREQRYSDHGSD) and 237-256 (DDRNHDGWSHDYDNRRDSSR).

As to quaternary structure, component of the nuclear exosome targeting (NEXT) complex composed of MTREX, ZCCHC8, and RBM7 that directs a subset of non-coding short-lived RNAs for exosomal degradation. Interacts with ZCCHC8 and SF3B2/SAP145. Binds to MTREX through ZCCHC8. Interacts with YWHAE and YWHAZ; these interactions are stress-dependent and RBM7 phosphorylation dependent; release RNA from the NEXT complex and may affect RNA targeting to the nuclear RNA exosomome for degradation. Interacts with MEPCE and LARP7, the core subunits of 7SK snRNP; upon genotoxic stress this interaction is enhanced, triggering the release of inactive P-TEFb complex from the core and P-TEFb complex activation. Post-translationally, phosphorylated at Ser-136 by MAPK14/p38-alpha-activated MAPKAPK2/MK2; this phosphorylation is stress-dependent; this phosphorylation decreases its RNA-binding capacity therefore affecting RNA nuclear exosome-mediated degradation. This phosphorylation mediates YWHAE and YWHAZ interactions.

Its subcellular location is the nucleus. The protein localises to the nucleoplasm. RNA-binding subunit of the trimeric nuclear exosome targeting (NEXT) complex, a complex that functions as an RNA exosome cofactor that directs a subset of non-coding short-lived RNAs for exosomal degradation. NEXT is involved in surveillance and turnover of aberrant transcripts and non-coding RNAs. Binds preferentially polyuridine sequences and associates with newly synthesized RNAs, including pre-mRNAs and short-lived exosome substrates such as promoter upstream transcripts (PROMPTs), enhancer RNAs (eRNAs), and 3'-extended products from small nuclear RNAs (snRNAs). Participates in several biological processes including DNA damage response (DDR) and stress response. During stress response, activation of the p38MAPK-MK2 pathway decreases RBM7-RNA-binding and subsequently the RNA exosome degradation activities, thereby modulating the turnover of non-coding transcriptome. Participates in DNA damage response (DDR), through its interaction with MEPCE and LARP7, the core subunits of 7SK snRNP complex, that release the positive transcription elongation factor b (P-TEFb) complex from the 7SK snRNP. In turn, activation of P-TEFb complex induces the transcription of P-TEFb-dependent DDR genes to promote cell viability. The protein is RNA-binding protein 7 of Mus musculus (Mouse).